A 147-amino-acid chain; its full sequence is MSQGQGGITLDELIAQADYLKRYIDSLQRTQLELLESINSIDSAKQAIETMKSGNKEMLVFIDRKGYLLAKVGGIIGDKVTVHLGLSYYAEVDLDSAIKILDKRKDEISKAAQDLNNELQKAASTYNQIVDILNQIQQAAARRQQGE.

This sequence belongs to the prefoldin subunit alpha family. Heterohexamer of two alpha and four beta subunits.

Its subcellular location is the cytoplasm. Molecular chaperone capable of stabilizing a range of proteins. Seems to fulfill an ATP-independent, HSP70-like function in archaeal de novo protein folding. This chain is Prefoldin subunit alpha (pfdA), found in Saccharolobus solfataricus (strain ATCC 35092 / DSM 1617 / JCM 11322 / P2) (Sulfolobus solfataricus).